Consider the following 185-residue polypeptide: Peptide deformylase (185 aa).

Cysteine 94 and histidine 136 together coordinate Fe cation. Glutamate 137 is an active-site residue. Histidine 140 is a binding site for Fe cation.

The protein belongs to the polypeptide deformylase family. The cofactor is Fe(2+).

It carries out the reaction N-terminal N-formyl-L-methionyl-[peptide] + H2O = N-terminal L-methionyl-[peptide] + formate. In terms of biological role, removes the formyl group from the N-terminal Met of newly synthesized proteins. Requires at least a dipeptide for an efficient rate of reaction. N-terminal L-methionine is a prerequisite for activity but the enzyme has broad specificity at other positions. This Chlorobium phaeobacteroides (strain BS1) protein is Peptide deformylase.